The sequence spans 130 residues: Odontogenesis associated phosphoprotein (130 aa).

A signal peptide spans 1-23 (MARRHCFSYWLLVCWLVVTVAEG).

In terms of tissue distribution, highly expressed in placenta.

The protein resides in the secreted. Functionally, may promote nucleation of hydroxyapatite. The polypeptide is Odontogenesis associated phosphoprotein (Homo sapiens (Human)).